Consider the following 349-residue polypeptide: Diacylglycerol O-acyltransferase 2B (349 aa).

Helical transmembrane passes span 44–64 (ICLI…ILIM) and 114–134 (YIMS…NFAT).

The protein belongs to the diacylglycerol acyltransferase family.

The protein resides in the endoplasmic reticulum membrane. It carries out the reaction an acyl-CoA + a 1,2-diacyl-sn-glycerol = a triacyl-sn-glycerol + CoA. It participates in glycerolipid metabolism; triacylglycerol biosynthesis. Its function is as follows. Catalyzes the terminal and only committed step in triacylglycerol synthesis by using diacylglycerol and fatty acyl CoA as substrates. Required for storage lipid synthesis. The protein is Diacylglycerol O-acyltransferase 2B (DGAT2B) of Umbelopsis ramanniana (Oleaginous fungus).